Consider the following 228-residue polypeptide: Aspartate racemase (228 aa).

47–49 (DRT) contacts substrate. Residue Cys82 is the Proton donor/acceptor of the active site. Residues 83 to 85 (NTA) and Lys164 each bind substrate. Cys194 acts as the Proton donor/acceptor in catalysis.

The protein belongs to the aspartate/glutamate racemases family. As to quaternary structure, homodimer. The existence of the interchain disulfide bond seen in the crystal structures is uncertain, but disulfide bonds have been reported for cytoplasmic proteins from thermophiles.

The catalysed reaction is L-aspartate = D-aspartate. Its activity is regulated as follows. Weakly inhibited by citrate, but not by asparagine. The sequence is that of Aspartate racemase from Pyrococcus horikoshii (strain ATCC 700860 / DSM 12428 / JCM 9974 / NBRC 100139 / OT-3).